The following is a 627-amino-acid chain: Ras and EF-hand domain-containing protein homolog (627 aa).

A coiled-coil region spans residues 55 to 245 (YERVIRNFLR…RKLHDSNDGL (191 aa)). Phosphoserine is present on residues S266 and S272. Residues 438-443 (AVGKSS), 541-544 (NKAD), and 578-579 (AK) each bind GTP.

This sequence belongs to the small GTPase superfamily. Rab family. In terms of assembly, homodimer. Interacts with the dynein-dynactin complex.

It localises to the cytoplasm. The protein resides in the perinuclear region. Binds predominantly GDP, and also GTP. Acts as a dynein adapter protein that activates dynein-mediated transport and dynein-dynactin motility on microtubules. In Mus musculus (Mouse), this protein is Ras and EF-hand domain-containing protein homolog (Rasef).